Consider the following 482-residue polypeptide: MDQLHVFFFPFLANGHILPTIDMAKLFSSRGVKATLITTHNNSAIFLKAINRSKILGFDISVLTIKFPSAEFGLPEGYETADQARSIDMMDEFFRACILLQEPLEELLKEHRPQALVADLFFYWANDAAAKFGIPRLLFHGSSSFAMIAAESVRRNKPYKNLSSDSDPFVVPDIPDKIILTKSQVPTPDETEENNTHITEMWKNISESENDCYGVIVNSFYELEPDYVDYCKNVLGRRAWHIGPLSLCNNEGEDVAERGKKSDIDAHECLNWLDSKNPDSVVYVCFGSMANFNAAQLHELAMGLEESGQEFIWVVRTCVDEEDESKWFPDGFEKRVQENNKGLIIKGWAPQVLILEHEAVGAFVSHCGWNSTLEGICGGVAMVTWPLFAEQFYNEKLMTDILRTGVSVGSLQWSRVTTSAVVVKRESISKAVRRLMAEEEGVDIRNRAKALKEKAKKAVEGGGSSYSDLSALLVELSSYPHN.

His16 (proton acceptor) is an active-site residue. His16 serves as a coordination point for an anthocyanidin. Asp119 functions as the Charge relay in the catalytic mechanism. Residues Ala349, Gln351, His366, Trp369, Asn370, Ser371, and Glu374 each contribute to the UDP-alpha-D-glucose site. Ala389 lines the an anthocyanidin pocket. Residues Glu390 and Gln391 each contribute to the UDP-alpha-D-glucose site.

Belongs to the UDP-glycosyltransferase family. In terms of processing, the N-terminus is blocked. As to expression, abundant in petals and barely detected in leaves.

The catalysed reaction is delphinidin 3,5-bis-O-beta-D-glucoside + UDP-alpha-D-glucose = delphinidin 3,3',5-tri-O-beta-D-glucoside + UDP + H(+). Specifically glucosylates the 3'-hydroxy group of delphinidin 3,5-di-O-glucoside to produce gentiodelphin. Shows a strict specificity for UDP-glucose as donor. The sequence is that of Anthocyanin 3'-O-beta-glucosyltransferase from Gentiana triflora (Clustered gentian).